A 301-amino-acid chain; its full sequence is Mitochondrial import receptor subunit TOM40 homolog (301 aa).

The segment covering 1–19 (MATPTESELASPIPQTNPG) has biased composition (polar residues). Positions 1–20 (MATPTESELASPIPQTNPGS) are disordered.

The protein belongs to the Tom40 family. As to quaternary structure, forms part of the preprotein translocase complex of the outer mitochondrial membrane (TOM complex). Interacts with mitochondrial targeting sequences. Ubiquitously expressed, but highly expressed in the pharyngeal muscles, the nerve ring, the intestine, gonadal sheath and in the tail hypodermis.

It localises to the mitochondrion outer membrane. In terms of biological role, channel-forming protein essential for import of protein precursors into mitochondria. Specifically required for nnt-1 accumulation in the mitochondria and may be involved in the secretion of daf-28/insulin from the mitochondria. Required for embryonic and larval development. The sequence is that of Mitochondrial import receptor subunit TOM40 homolog from Caenorhabditis elegans.